Reading from the N-terminus, the 286-residue chain is Cysteine-rich repeat secretory protein 57 (286 aa).

The first 20 residues, Met-1–Ala-20, serve as a signal peptide directing secretion. The Extracellular segment spans residues Ile-21–Arg-265. 2 Gnk2-homologous domains span residues His-29–Phe-131 and Thr-137–Ser-247. N-linked (GlcNAc...) asparagine glycans are attached at residues Asn-35, Asn-40, Asn-44, Asn-60, Asn-69, Asn-90, Asn-100, Asn-108, Asn-209, and Asn-246. A helical membrane pass occupies residues Gly-266–Leu-284. Residues Gly-285–Leu-286 lie on the Cytoplasmic side of the membrane.

It belongs to the cysteine-rich repeat secretory protein family.

The protein resides in the membrane. The sequence is that of Cysteine-rich repeat secretory protein 57 (CRRSP57) from Arabidopsis thaliana (Mouse-ear cress).